A 402-amino-acid chain; its full sequence is MFTYITSLPSPEWEKSFPRTISILGSTGSIGTNALDVIKSHKELFHIVALGGGKNVQLLAKQAIQWKPDYLAVQDETSKEALIPLLPINYKPSIFVGQQGYVKLASLPEVTTVLSAQVGAAGLHGTVAAAKNGKVICLANKETLVLAGKLIKNLCLQSGAVILPVDSEHNAIFQALYTRNPKTVQNIILTASGGPFRNKKYEFLKNVTPEQAINHPNWKMGTKISVDSATMINKGLEIIEAHYLYGLPSEQIKIVVHPQSYVHSLVEFTDHSLMAHLGTADMRMPIAHCLAWPNYLNVGVEPFVLSKIGTLTFEEPDLDSFPCINLARDALVAGTSAQIILNAANEVAVDAFLKKQIGFMDIPILISKALEADSTPEPTTLESIEALDQQTRHTISQWIEVH.

NADPH contacts are provided by T27, G28, S29, I30, G53, K54, N55, and N140. K141 is a binding site for 1-deoxy-D-xylulose 5-phosphate. Position 142 (E142) interacts with NADPH. D166 is a Mn(2+) binding site. 1-deoxy-D-xylulose 5-phosphate is bound by residues S167, E168, S192, and H215. E168 contributes to the Mn(2+) binding site. G221 contributes to the NADPH binding site. S228, N233, K234, and E237 together coordinate 1-deoxy-D-xylulose 5-phosphate. A Mn(2+)-binding site is contributed by E237.

This sequence belongs to the DXR family. Mg(2+) is required as a cofactor. It depends on Mn(2+) as a cofactor.

It carries out the reaction 2-C-methyl-D-erythritol 4-phosphate + NADP(+) = 1-deoxy-D-xylulose 5-phosphate + NADPH + H(+). It participates in isoprenoid biosynthesis; isopentenyl diphosphate biosynthesis via DXP pathway; isopentenyl diphosphate from 1-deoxy-D-xylulose 5-phosphate: step 1/6. Catalyzes the NADPH-dependent rearrangement and reduction of 1-deoxy-D-xylulose-5-phosphate (DXP) to 2-C-methyl-D-erythritol 4-phosphate (MEP). The protein is 1-deoxy-D-xylulose 5-phosphate reductoisomerase of Lawsonia intracellularis (strain PHE/MN1-00).